We begin with the raw amino-acid sequence, 701 residues long: Elongation factor G 1 (701 aa).

The 283-residue stretch at 8–290 (VRYRNIGICA…AVVEYLPAPT (283 aa)) folds into the tr-type G domain. GTP is bound by residues 17-24 (AHVDAGKT), 88-92 (DTPGH), and 142-145 (NKMD).

Belongs to the TRAFAC class translation factor GTPase superfamily. Classic translation factor GTPase family. EF-G/EF-2 subfamily.

It localises to the cytoplasm. Catalyzes the GTP-dependent ribosomal translocation step during translation elongation. During this step, the ribosome changes from the pre-translocational (PRE) to the post-translocational (POST) state as the newly formed A-site-bound peptidyl-tRNA and P-site-bound deacylated tRNA move to the P and E sites, respectively. Catalyzes the coordinated movement of the two tRNA molecules, the mRNA and conformational changes in the ribosome. This Saccharophagus degradans (strain 2-40 / ATCC 43961 / DSM 17024) protein is Elongation factor G 1.